Reading from the N-terminus, the 98-residue chain is NADH-ubiquinone oxidoreductase chain 4L (98 aa).

The next 3 membrane-spanning stretches (helical) occupy residues 1–21 (MTLI…GLLM), 29–49 (ALLC…LTIL), and 61–81 (IILL…LVTI).

It belongs to the complex I subunit 4L family. Core subunit of respiratory chain NADH dehydrogenase (Complex I) which is composed of 45 different subunits.

Its subcellular location is the mitochondrion inner membrane. The enzyme catalyses a ubiquinone + NADH + 5 H(+)(in) = a ubiquinol + NAD(+) + 4 H(+)(out). Its function is as follows. Core subunit of the mitochondrial membrane respiratory chain NADH dehydrogenase (Complex I) which catalyzes electron transfer from NADH through the respiratory chain, using ubiquinone as an electron acceptor. Part of the enzyme membrane arm which is embedded in the lipid bilayer and involved in proton translocation. The protein is NADH-ubiquinone oxidoreductase chain 4L (MT-ND4L) of Eubalaena australis (Southern right whale).